The chain runs to 386 residues: Galactokinase (386 aa).

Substrate is bound at residue 35–38 (EHTD). Position 125–131 (125–131 (GAGLSSS)) interacts with ATP. 2 residues coordinate Mg(2+): serine 131 and glutamate 163. The active-site Proton acceptor is aspartate 175. Tyrosine 224 provides a ligand contact to substrate.

The protein belongs to the GHMP kinase family. GalK subfamily.

It localises to the cytoplasm. The enzyme catalyses alpha-D-galactose + ATP = alpha-D-galactose 1-phosphate + ADP + H(+). It participates in carbohydrate metabolism; galactose metabolism. Catalyzes the transfer of the gamma-phosphate of ATP to D-galactose to form alpha-D-galactose-1-phosphate (Gal-1-P). This chain is Galactokinase, found in Vibrio cholerae serotype O1 (strain ATCC 39315 / El Tor Inaba N16961).